The chain runs to 350 residues: Phosphotriesterase-related protein (350 aa).

Residues His22, His24, Glu169, His201, His230, and Asp298 each contribute to the a divalent metal cation site.

Belongs to the metallo-dependent hydrolases superfamily. Phosphotriesterase family. A divalent metal cation serves as cofactor.

The sequence is that of Phosphotriesterase-related protein from Drosophila mojavensis (Fruit fly).